The sequence spans 531 residues: O-phosphoserine--tRNA(Cys) ligase (531 aa).

Residues 189–191 (HMT), 234–236 (SAS), 276–277 (YY), and Asn-319 contribute to the substrate site.

It belongs to the class-II aminoacyl-tRNA synthetase family. O-phosphoseryl-tRNA(Cys) synthetase subfamily. As to quaternary structure, homotetramer. Interacts with SepCysS.

It carries out the reaction tRNA(Cys) + O-phospho-L-serine + ATP = O-phospho-L-seryl-tRNA(Cys) + AMP + diphosphate. Its function is as follows. Catalyzes the attachment of O-phosphoserine (Sep) to tRNA(Cys). This chain is O-phosphoserine--tRNA(Cys) ligase, found in Methanospirillum hungatei JF-1 (strain ATCC 27890 / DSM 864 / NBRC 100397 / JF-1).